A 303-amino-acid polypeptide reads, in one-letter code: Eukaryotic translation initiation factor 3 subunit F (303 aa).

Residues 1–10 (MSLDTSSSAI) show a composition bias toward polar residues. Positions 1–25 (MSLDTSSSAIHLQLPPTSSSLRPPS) are disordered. Residues 12–25 (LQLPPTSSSLRPPS) show a composition bias toward low complexity. Positions 27-165 (ITVHPSVIAQ…VKGWVSQPLG (139 aa)) constitute an MPN domain.

It belongs to the eIF-3 subunit F family. In terms of assembly, component of the eukaryotic translation initiation factor 3 (eIF-3) complex.

It localises to the cytoplasm. Its function is as follows. Component of the eukaryotic translation initiation factor 3 (eIF-3) complex, which is involved in protein synthesis of a specialized repertoire of mRNAs and, together with other initiation factors, stimulates binding of mRNA and methionyl-tRNAi to the 40S ribosome. The eIF-3 complex specifically targets and initiates translation of a subset of mRNAs involved in cell proliferation. The polypeptide is Eukaryotic translation initiation factor 3 subunit F (Cryptococcus neoformans var. neoformans serotype D (strain B-3501A) (Filobasidiella neoformans)).